Here is a 206-residue protein sequence, read N- to C-terminus: Probable NAD(+) phosphorylase Rv3189 (206 aa).

Belongs to the MbcT/ParT/Res family. As to quaternary structure, forms a heterotetramer with cognate antitoxin Rv3188.

It carries out the reaction phosphate + NAD(+) = ADP-alpha-D-ribose 1''-phosphate + nicotinamide + H(+). Functionally, probable toxic component of a type II toxin-antitoxin (TA) system. Degrades NAD(+) by phosphorolysis. Neutralized by its cognate antitoxin Rv3188. The protein is Probable NAD(+) phosphorylase Rv3189 of Mycobacterium tuberculosis (strain ATCC 25618 / H37Rv).